Reading from the N-terminus, the 463-residue chain is L-seryl-tRNA(Sec) selenium transferase (463 aa).

An N6-(pyridoxal phosphate)lysine modification is found at K295.

It belongs to the SelA family. Homodecamer; pentamer of dimers. Binds only one seryl-tRNA(Sec) per dimer. It depends on pyridoxal 5'-phosphate as a cofactor.

The protein resides in the cytoplasm. The enzyme catalyses L-seryl-tRNA(Sec) + selenophosphate + H(+) = L-selenocysteinyl-tRNA(Sec) + phosphate. Its pathway is aminoacyl-tRNA biosynthesis; selenocysteinyl-tRNA(Sec) biosynthesis; selenocysteinyl-tRNA(Sec) from L-seryl-tRNA(Sec) (bacterial route): step 1/1. Its function is as follows. Converts seryl-tRNA(Sec) to selenocysteinyl-tRNA(Sec) required for selenoprotein biosynthesis. The chain is L-seryl-tRNA(Sec) selenium transferase from Escherichia coli O45:K1 (strain S88 / ExPEC).